The chain runs to 104 residues: MSGFTLSDLERIVDERSKAPPEESWTAKLCAAGQPKAAKKLGEEAIEAVMAAVTGDRDNLTYEAADLLYHLMVVLKIAGIPLQNVMGELERRTAQSGLQEKASR.

This sequence belongs to the PRA-PH family.

Its subcellular location is the cytoplasm. It carries out the reaction 1-(5-phospho-beta-D-ribosyl)-ATP + H2O = 1-(5-phospho-beta-D-ribosyl)-5'-AMP + diphosphate + H(+). It participates in amino-acid biosynthesis; L-histidine biosynthesis; L-histidine from 5-phospho-alpha-D-ribose 1-diphosphate: step 2/9. The polypeptide is Phosphoribosyl-ATP pyrophosphatase (Rhizobium rhizogenes (strain K84 / ATCC BAA-868) (Agrobacterium radiobacter)).